The following is a 275-amino-acid chain: Tryptophan synthase alpha chain (275 aa).

Catalysis depends on proton acceptor residues Glu49 and Asp60.

It belongs to the TrpA family. Tetramer of two alpha and two beta chains.

The enzyme catalyses (1S,2R)-1-C-(indol-3-yl)glycerol 3-phosphate + L-serine = D-glyceraldehyde 3-phosphate + L-tryptophan + H2O. The protein operates within amino-acid biosynthesis; L-tryptophan biosynthesis; L-tryptophan from chorismate: step 5/5. Its function is as follows. The alpha subunit is responsible for the aldol cleavage of indoleglycerol phosphate to indole and glyceraldehyde 3-phosphate. The sequence is that of Tryptophan synthase alpha chain from Psychrobacter sp. (strain PRwf-1).